Here is a 40-residue protein sequence, read N- to C-terminus: Photosystem II reaction center protein J (40 aa).

A helical transmembrane segment spans residues 8–28 (IPLWVVATIAGLGVITVVGIF).

It belongs to the PsbJ family. In terms of assembly, PSII is composed of 1 copy each of membrane proteins PsbA, PsbB, PsbC, PsbD, PsbE, PsbF, PsbH, PsbI, PsbJ, PsbK, PsbL, PsbM, PsbT, PsbX, PsbY, PsbZ, Psb30/Ycf12, peripheral proteins PsbO, CyanoQ (PsbQ), PsbU, PsbV and a large number of cofactors. It forms dimeric complexes.

The protein localises to the cellular thylakoid membrane. In terms of biological role, one of the components of the core complex of photosystem II (PSII). PSII is a light-driven water:plastoquinone oxidoreductase that uses light energy to abstract electrons from H(2)O, generating O(2) and a proton gradient subsequently used for ATP formation. It consists of a core antenna complex that captures photons, and an electron transfer chain that converts photonic excitation into a charge separation. In Trichormus variabilis (strain ATCC 29413 / PCC 7937) (Anabaena variabilis), this protein is Photosystem II reaction center protein J.